A 560-amino-acid chain; its full sequence is Kinesin light chain 1 (560 aa).

Positions 27-156 (KTKQVIQGLE…HLEFMNQLKK (130 aa)) form a coiled coil. Over residues 156–176 (KYDDDISPSEDKDSDSSKEPL) the composition is skewed to basic and acidic residues. A disordered region spans residues 156–203 (KYDDDISPSEDKDSDSSKEPLDDLFPNDEDDPGQGIQQQHSSAAAAAQ). Phosphoserine is present on Ser162. Residues 188 to 203 (GQGIQQQHSSAAAAAQ) are compositionally biased toward low complexity. 5 TPR repeats span residues 213-246 (LRTLHNLVIQYASQGRYEVAVPLCKQALEDLEKT), 255-288 (ATMLNILALVYRDQNKYKDAANLLNDALAIREKT), 297-330 (AATLNNLAVLYGKRGKYKEAEPLCKRALEIREKV), 339-372 (AKQLNNLALLCQNQGKYEEVEYYYQRALEIYQTK), and 381-414 (AKTKNNLASCYLKQGKFKQAETLYKEILTRAHER). The residue at position 449 (Tyr449) is a Phosphotyrosine. Ser460 is subject to Phosphoserine. The stretch at 464 to 497 (TTTLKNLGALYRRQGKFEAAETLEEAALRSRKQG) is one TPR 6 repeat. A phosphoserine mark is found at Ser521 and Ser524.

It belongs to the kinesin light chain family. As to quaternary structure, oligomeric complex composed of two heavy chains and two light chains. Interacts with SPAG9. Interacts with ATCAY; may link mitochondria to KLC1 and regulate mitochondria localization into neuron projections. Interacts (via TPR repeats) with TOR1A; the interaction associates TOR1A with the kinesin oligomeric complex. Interacts with BORCS5. Interacts with MAPK8IP3/JIP3 and NTRK2/TRKB; interaction with NTRK2/TRKB is mediated by MAPK8IP3/JIP3. Interacts with CLSTN1; phosphorylation at Ser-460 inhibits interaction with CLSTN1. Post-translationally, phosphorylation at Ser-460 by ERK inhibits interaction with CLSTN1 and localization to cytoplasmic vesicles. As to expression, expressed in brain (at protein level).

The protein localises to the cell projection. It localises to the growth cone. The protein resides in the cytoplasmic vesicle. It is found in the cytoplasm. Its subcellular location is the cytoskeleton. Functionally, kinesin is a microtubule-associated force-producing protein that may play a role in organelle transport. The light chain may function in coupling of cargo to the heavy chain or in the modulation of its ATPase activity. The polypeptide is Kinesin light chain 1 (Klc1) (Rattus norvegicus (Rat)).